We begin with the raw amino-acid sequence, 747 residues long: MERTYQYAWIIPFVPLLVTMLIGLELLLNPTATKNIRRIWAFPAVLLLSIVMVFSTKLAIQQINGSSIYEYLWSWSITSDFSLEFGYLIDPLTSIMSILITTVGIMVLIYSDNYMSHDRGYLRFFAYMSFFNTAMLGLVTSPNLIQIHIFWELVGMCSYLLIGFWFTRPIAANACQKAFVTNRVGDFGLLLGILGFYLITGSFEFQDLFEIFNDSIINNNEINSSFATLCAFLLFLGAVAKSAQFPLHVWLPDAMEGPTPISALIHAATMVAAGIFLVARLLPLFIAIPYIMNIISLIGVITVLLGATLALAQRDIKRSLAYSTMSQLGYMMLALGIGSYRAALFHLITHAYSKALLFLGSGSIIHSMEPIVGYSPAKSQNMVLMGGLTKYMPITKTTFFLGTLSLCGIPPLACFWSKDEILNDSWLYSPIFAIIAFYTAGLTAFYMFRMYLLTFEGHLRSHFQNYSGHTNSSFYSISIWGQEGSKPVSSNLLLTTRNNNDKSSFSNCSFSNTYKIAGYVRTMRSSFSTHFLNKDSHTLLYPHESDNTMLFPLLILAIFTLFVGCIGIHFGHEVMEVDILSKWLTPSMKLFHQNSTDEDWYKFLTNAFYSVSIAYFGIFLASVLYGSVYSDRQNLYLINSFAKIDSKMRIRLEQIINVIYNWSYNRGYIDVYYEKVFIKGVRELAQLAHSFDRRVIDGVTNGIGVASFFLGEGIKYIGGGRISSYLFLYLACVSIVLLIYYYYNFLN.

16 helical membrane passes run alanine 8–leucine 28, isoleucine 39–alanine 59, isoleucine 89–isoleucine 109, phenylalanine 125–isoleucine 145, isoleucine 147–threonine 167, glycine 185–phenylalanine 205, alanine 231–leucine 251, threonine 259–alanine 279, leucine 281–isoleucine 301, leucine 328–isoleucine 348, alanine 355–serine 375, threonine 397–serine 417, tryptophan 426–tyrosine 446, leucine 550–phenylalanine 570, phenylalanine 608–valine 628, and leucine 726–leucine 746.

Belongs to the complex I subunit 5 family. As to quaternary structure, NDH is composed of at least 16 different subunits, 5 of which are encoded in the nucleus.

The protein localises to the plastid. It is found in the chloroplast thylakoid membrane. The catalysed reaction is a plastoquinone + NADH + (n+1) H(+)(in) = a plastoquinol + NAD(+) + n H(+)(out). It carries out the reaction a plastoquinone + NADPH + (n+1) H(+)(in) = a plastoquinol + NADP(+) + n H(+)(out). NDH shuttles electrons from NAD(P)H:plastoquinone, via FMN and iron-sulfur (Fe-S) centers, to quinones in the photosynthetic chain and possibly in a chloroplast respiratory chain. The immediate electron acceptor for the enzyme in this species is believed to be plastoquinone. Couples the redox reaction to proton translocation, and thus conserves the redox energy in a proton gradient. This is NAD(P)H-quinone oxidoreductase subunit 5, chloroplastic (ndhF) from Nymphaea alba (White water-lily).